The following is a 134-amino-acid chain: Small ribosomal subunit protein uS8 (134 aa).

It belongs to the universal ribosomal protein uS8 family. Part of the 30S ribosomal subunit. Contacts proteins S5 and S12.

Functionally, one of the primary rRNA binding proteins, it binds directly to 16S rRNA central domain where it helps coordinate assembly of the platform of the 30S subunit. In Fervidobacterium nodosum (strain ATCC 35602 / DSM 5306 / Rt17-B1), this protein is Small ribosomal subunit protein uS8.